The primary structure comprises 317 residues: Single myb histone 6 (317 aa).

In terms of domain architecture, HTH myb-type spans 1–61 (MGAPKQRWTS…KWRNMNVIVS (61 aa)). A DNA-binding region (H-T-H motif) is located at residues 28–57 (WRTILKDPEFSSTLCYRSNVDLKDKWRNMN). The H15 domain occupies 121–189 (KSHRLDNIIM…KVNRKYRIAP (69 aa)). Residues 244–288 (VAAARAVAEAEAIMAEAEAAAKEAEAAEAEAQAAQAFAEAAFLTL) adopt a coiled-coil conformation.

This sequence belongs to the histone H1/H5 family. SMH subfamily. Forms a homodimer and heterodimers.

It localises to the nucleus. The protein resides in the chromosome. It is found in the nucleolus. The protein localises to the telomere. Binds preferentially double-stranded telomeric repeats, but may also bind to the single telomeric strand. The chain is Single myb histone 6 (SMH6) from Zea mays (Maize).